The primary structure comprises 334 residues: Ornithine carbamoyltransferase (334 aa).

Carbamoyl phosphate is bound by residues 56 to 59 (STRT), Gln-83, Arg-107, and 134 to 137 (HPTQ). L-ornithine is bound by residues Asn-168, Asp-232, and 236–237 (SM). Carbamoyl phosphate contacts are provided by residues 274-275 (CL) and Arg-320.

The protein belongs to the aspartate/ornithine carbamoyltransferase superfamily. OTCase family.

The protein resides in the cytoplasm. It catalyses the reaction carbamoyl phosphate + L-ornithine = L-citrulline + phosphate + H(+). It functions in the pathway amino-acid biosynthesis; L-arginine biosynthesis; L-arginine from L-ornithine and carbamoyl phosphate: step 1/3. In terms of biological role, reversibly catalyzes the transfer of the carbamoyl group from carbamoyl phosphate (CP) to the N(epsilon) atom of ornithine (ORN) to produce L-citrulline. The chain is Ornithine carbamoyltransferase from Escherichia coli O45:K1 (strain S88 / ExPEC).